The sequence spans 285 residues: RNA exonuclease 4 (285 aa).

The segment covering 1–14 (MAKLSQNWKKLSSK) has biased composition (polar residues). The tract at residues 1-35 (MAKLSQNWKKLSSKIQDKPKNGSVKKPTLKGKISK) is disordered. The region spanning 116 to 267 (YVAIDCEFVG…EDARATMLLF (152 aa)) is the Exonuclease domain.

The protein belongs to the REXO4 family.

Its subcellular location is the nucleus. Its function is as follows. Exoribonuclease involved in ribosome biosynthesis. Involved in the processing of ITS1, the internal transcribed spacer localized between the 18S and 5.8S rRNAs. This chain is RNA exonuclease 4 (REX4), found in Candida albicans (strain SC5314 / ATCC MYA-2876) (Yeast).